Here is a 430-residue protein sequence, read N- to C-terminus: Histone acetyltransferase type B subunit 2 (430 aa).

WD repeat units follow at residues proline 129–threonine 169, glycine 180–serine 220, arginine 233–alanine 273, alanine 279–histidine 319, and glycine 323–threonine 363. The interval glutamate 365–aspartate 369 is interaction with the histone H4 N-terminus. Residues glycine 380–aspartate 420 form a WD 6 repeat. Phosphoserine is present on serine 425.

This sequence belongs to the WD repeat RBAP46/RBAP48/MSI1 family. As to quaternary structure, component of the HAT-B complex composed of at least hat1 and hat2. The HAT-B complex binds to histone H4 tail. Component of the CENP-A recruiting complex composed of at least mis16, mis19, mis19 and mis20.

The protein localises to the cytoplasm. It localises to the nucleus. Its subcellular location is the chromosome. The protein resides in the centromere. It is found in the kinetochore. Functionally, regulatory subunit of the histone acetylase B (HAT-B) complex. The complex acetylates 'Lys-12' of histone H4 which is required for telomeric silencing. Component of the CENP-A recruiting complex that ensures the integrity of mitotic spindles through maintenance of kinetochore factors mis6/CENP-I and cnp1/CENP-A. Maintains the deacetylated state of histones specifically in the central core of the centromeres. This Schizosaccharomyces pombe (strain 972 / ATCC 24843) (Fission yeast) protein is Histone acetyltransferase type B subunit 2 (mis16).